The following is an 826-amino-acid chain: E3 ubiquitin ligase PARAQUAT TOLERANCE 3 (826 aa).

Residues I3 to P76 enclose the DWNN domain. A CCHC-type zinc finger spans residues C203–C216. S278 bears the Phosphoserine mark. The RING-type; degenerate zinc-finger motif lies at C288–C326. Polar residues-rich tracts occupy residues S356–Q365, P396–K406, and N435–P454. Disordered regions lie at residues S356–K406, N435–Y488, and H585–A826. At S397 the chain carries Phosphoserine. Basic and acidic residues predominate over residues M588–R624. The segment covering I625–P635 has biased composition (polar residues). Positions D651–S667 are enriched in basic and acidic residues. 2 consecutive short sequence motifs (nuclear localization signal) follow at residues S668 to P675 and D695 to R702. Residues R680–R706 are compositionally biased toward basic and acidic residues. Basic residues predominate over residues F790–R799. S800 carries the post-translational modification Phosphoserine. Basic and acidic residues predominate over residues G809 to A826.

As to quaternary structure, interacts with PRMT13/PRMT4B in the nucleus. Expressed constitutively in both shoot and root tissues.

The protein localises to the nucleus. It catalyses the reaction S-ubiquitinyl-[E2 ubiquitin-conjugating enzyme]-L-cysteine + [acceptor protein]-L-lysine = [E2 ubiquitin-conjugating enzyme]-L-cysteine + N(6)-ubiquitinyl-[acceptor protein]-L-lysine.. Its function is as follows. E3 ubiquitin ligase acting as a negative regulator of oxidative stress tolerance, probably by mediating 26S proteasome-mediated degradation of PRMT13/PRMT4B, thus preventing APX1 and GPX1 accumulation via the reduction of histone H3 methylation (H3R17me2a). Confers sensitivity to cadmium CdCl(2) and salt NaCl stresses. In Arabidopsis thaliana (Mouse-ear cress), this protein is E3 ubiquitin ligase PARAQUAT TOLERANCE 3.